The primary structure comprises 94 residues: Co-chaperonin GroES (94 aa).

The protein belongs to the GroES chaperonin family. As to quaternary structure, heptamer of 7 subunits arranged in a ring. Interacts with the chaperonin GroEL.

It localises to the cytoplasm. Its function is as follows. Together with the chaperonin GroEL, plays an essential role in assisting protein folding. The GroEL-GroES system forms a nano-cage that allows encapsulation of the non-native substrate proteins and provides a physical environment optimized to promote and accelerate protein folding. GroES binds to the apical surface of the GroEL ring, thereby capping the opening of the GroEL channel. The chain is Co-chaperonin GroES from Brevibacillus brevis (strain 47 / JCM 6285 / NBRC 100599).